Reading from the N-terminus, the 78-residue chain is Large ribosomal subunit protein bL28 (78 aa).

Residues methionine 1–alanine 21 form a disordered region.

The protein belongs to the bacterial ribosomal protein bL28 family.

In Sodalis glossinidius (strain morsitans), this protein is Large ribosomal subunit protein bL28.